A 415-amino-acid polypeptide reads, in one-letter code: Imidazolonepropionase (415 aa).

Residues H76 and H78 each coordinate Fe(3+). 2 residues coordinate Zn(2+): H76 and H78. 4-imidazolone-5-propanoate contacts are provided by R85, Y148, and H181. Position 148 (Y148) interacts with N-formimidoyl-L-glutamate. H246 lines the Fe(3+) pocket. H246 lines the Zn(2+) pocket. E249 provides a ligand contact to 4-imidazolone-5-propanoate. D320 serves as a coordination point for Fe(3+). D320 lines the Zn(2+) pocket. N322 and G324 together coordinate N-formimidoyl-L-glutamate. A 4-imidazolone-5-propanoate-binding site is contributed by T325.

Belongs to the metallo-dependent hydrolases superfamily. HutI family. The cofactor is Zn(2+). Fe(3+) serves as cofactor.

It is found in the cytoplasm. It carries out the reaction 4-imidazolone-5-propanoate + H2O = N-formimidoyl-L-glutamate. It participates in amino-acid degradation; L-histidine degradation into L-glutamate; N-formimidoyl-L-glutamate from L-histidine: step 3/3. Functionally, catalyzes the hydrolytic cleavage of the carbon-nitrogen bond in imidazolone-5-propanoate to yield N-formimidoyl-L-glutamate. It is the third step in the universal histidine degradation pathway. This Thermoanaerobacter pseudethanolicus (strain ATCC 33223 / 39E) (Clostridium thermohydrosulfuricum) protein is Imidazolonepropionase.